The sequence spans 103 residues: Muscarinic toxin BM14 (103 aa).

Residues 1-21 form the signal peptide; sequence MKTLLLTLVVVTIICLDLGYT. 5 disulfide bridges follow: Cys24–Cys45, Cys27–Cys37, Cys38–Cys72, Cys76–Cys90, and Cys91–Cys96.

The protein belongs to the three-finger toxin family. Ancestral subfamily. Orphan group XVII sub-subfamily. As to expression, expressed by the venom gland.

The protein localises to the secreted. This toxin inhibits the binding of [3H]quinuclidinyl benzilate to the M2 muscarinic acetylcholine (mAchR) receptor subtype (CHRM2). This is Muscarinic toxin BM14 from Bungarus multicinctus (Many-banded krait).